The primary structure comprises 203 residues: Small ribosomal subunit protein uS4 (203 aa).

The S4 RNA-binding domain maps to 93 to 156; that stretch reads RRLDNVVYRL…IKVPAILEAV (64 aa).

This sequence belongs to the universal ribosomal protein uS4 family. In terms of assembly, part of the 30S ribosomal subunit. Contacts protein S5. The interaction surface between S4 and S5 is involved in control of translational fidelity.

Functionally, one of the primary rRNA binding proteins, it binds directly to 16S rRNA where it nucleates assembly of the body of the 30S subunit. In terms of biological role, with S5 and S12 plays an important role in translational accuracy. The polypeptide is Small ribosomal subunit protein uS4 (Streptococcus suis (strain 98HAH33)).